An 870-amino-acid chain; its full sequence is Leucine--tRNA ligase (870 aa).

The short motif at Pro36 to His46 is the 'HIGH' region element. The short motif at Lys602–Ser606 is the 'KMSKS' region element. Lys605 is an ATP binding site.

The protein belongs to the class-I aminoacyl-tRNA synthetase family.

It localises to the cytoplasm. The enzyme catalyses tRNA(Leu) + L-leucine + ATP = L-leucyl-tRNA(Leu) + AMP + diphosphate. The protein is Leucine--tRNA ligase of Rickettsia akari (strain Hartford).